The chain runs to 484 residues: tRNA sulfurtransferase (484 aa).

The 105-residue stretch at 63–167 (QGIRDRLSCM…DQRLFVVHDQ (105 aa)) folds into the THUMP domain. ATP is bound by residues 185–186 (LM), lysine 267, glycine 289, and glutamine 298. An intrachain disulfide couples cysteine 346 to cysteine 457. One can recognise a Rhodanese domain in the interval 405-483 (ALAGQVIIDI…GHANVRVYRP (79 aa)). The active-site Cysteine persulfide intermediate is the cysteine 457.

This sequence belongs to the ThiI family.

It localises to the cytoplasm. The catalysed reaction is [ThiI sulfur-carrier protein]-S-sulfanyl-L-cysteine + a uridine in tRNA + 2 reduced [2Fe-2S]-[ferredoxin] + ATP + H(+) = [ThiI sulfur-carrier protein]-L-cysteine + a 4-thiouridine in tRNA + 2 oxidized [2Fe-2S]-[ferredoxin] + AMP + diphosphate. The enzyme catalyses [ThiS sulfur-carrier protein]-C-terminal Gly-Gly-AMP + S-sulfanyl-L-cysteinyl-[cysteine desulfurase] + AH2 = [ThiS sulfur-carrier protein]-C-terminal-Gly-aminoethanethioate + L-cysteinyl-[cysteine desulfurase] + A + AMP + 2 H(+). It functions in the pathway cofactor biosynthesis; thiamine diphosphate biosynthesis. Functionally, catalyzes the ATP-dependent transfer of a sulfur to tRNA to produce 4-thiouridine in position 8 of tRNAs, which functions as a near-UV photosensor. Also catalyzes the transfer of sulfur to the sulfur carrier protein ThiS, forming ThiS-thiocarboxylate. This is a step in the synthesis of thiazole, in the thiamine biosynthesis pathway. The sulfur is donated as persulfide by IscS. This chain is tRNA sulfurtransferase, found in Pseudomonas syringae pv. tomato (strain ATCC BAA-871 / DC3000).